We begin with the raw amino-acid sequence, 519 residues long: Phosphate acetyltransferase (519 aa).

The segment at 196–519 (AFQRSLEKKA…LISAIQAQDY (324 aa)) is phosphate acetyltransferase.

It in the N-terminal section; belongs to the CobB/CobQ family. The protein in the C-terminal section; belongs to the phosphate acetyltransferase and butyryltransferase family.

It is found in the cytoplasm. It catalyses the reaction acetyl-CoA + phosphate = acetyl phosphate + CoA. Its pathway is metabolic intermediate biosynthesis; acetyl-CoA biosynthesis; acetyl-CoA from acetate: step 2/2. In Helicobacter pylori (strain J99 / ATCC 700824) (Campylobacter pylori J99), this protein is Phosphate acetyltransferase (pta).